A 1048-amino-acid polypeptide reads, in one-letter code: Bifunctional heparan sulfate N-deacetylase/N-sulfotransferase (1048 aa).

Over 1–172 (MTISGGNQHN…RRCFGINVRR (172 aa)) the chain is Cytoplasmic. Residues 173 to 192 (CVLALLAITMVSIFYYTHYV) form a helical; Signal-anchor for type II membrane protein membrane-spanning segment. The heparan sulfate N-deacetylase stretch occupies residues 192 to 752 (VDTGVFNGLI…VRHKKIWSKT (561 aa)). Residues 193–1048 (DTGVFNGLIQ…WLKDDLSTGT (856 aa)) are Lumenal-facing. Residues Asn-388 and Asn-555 are each glycosylated (N-linked (GlcNAc...) asparagine). The heparan sulfate N-sulfotransferase stretch occupies residues 753 to 1048 (KNCDSLPKFL…WLKDDLSTGT (296 aa)). Residue Lys-768 is the For sulfotransferase activity of the active site. Residue 768-772 (KTGTT) participates in 3'-phosphoadenylyl sulfate binding. N-linked (GlcNAc...) asparagine glycosylation occurs at Asn-823. A 3'-phosphoadenylyl sulfate-binding site is contributed by Ser-877. Asn-892 carries an N-linked (GlcNAc...) asparagine glycan. Cysteines 983 and 993 form a disulfide. 998 to 1002 (KGRQY) is a 3'-phosphoadenylyl sulfate binding site.

Belongs to the sulfotransferase 1 family. NDST subfamily. As to quaternary structure, monomer.

It is found in the golgi apparatus membrane. It catalyses the reaction alpha-D-glucosaminyl-[heparan sulfate](n) + 3'-phosphoadenylyl sulfate = N-sulfo-alpha-D-glucosaminyl-[heparan sulfate](n) + adenosine 3',5'-bisphosphate + 2 H(+). The protein operates within glycan metabolism; heparan sulfate biosynthesis. It participates in glycan metabolism; heparin biosynthesis. Functionally, essential bifunctional enzyme that catalyzes both the N-deacetylation and the N-sulfation of glucosamine (GlcNAc) of the glycosaminoglycan in heparan sulfate. Modifies the GlcNAc-GlcA disaccharide repeating sugar backbone to make N-sulfated heparosan, a prerequisite substrate for later modifications in heparin biosynthesis. Plays a role in diffusion of morphogen wingless (wg) via its role in heparan sulfate proteoglycans (HSPGs) biosynthesis, HSPGs being required for movement of wg morphogens. Required for wg signaling during both embryonic and imaginal disk development. Also required for FGF receptor signaling. In Drosophila melanogaster (Fruit fly), this protein is Bifunctional heparan sulfate N-deacetylase/N-sulfotransferase (sfl).